The following is a 135-amino-acid chain: Early nodulin-5 (135 aa).

The signal sequence occupies residues 1–23 (MASSSSPIFLMIIFSMWLLFSYS).

Invasion zone and early symbiotic zone.

Involved in the infection process during the plant-rhizobium interaction. The protein is Early nodulin-5 (ENOD5) of Pisum sativum (Garden pea).